The primary structure comprises 486 residues: MTEIRLTNTKTRRKEAFEPIDRKNVRLYVCGPTVYDRAHLGNGRPVVVFDVLFRLLRHVYGESHVTYVRNFTDVDDKINAAALARKDAGDPRSLEALIRERTDETIRWYHEDMDALGALRPTHEPRATEWIGAMIAMIEDLIAKGHAYEREGHVLFRVRSYRDYGALSGRSVDDMIAGARVEVAPFKEDPMDFVLWKPSDDELPGWDSPWGRGRPGWHIECSAMSYELLGATFDIHAGGIDLQFPHHENEIAQSCCAHPEGGFAKVWMHNEMLLVDGRKMSKSLGNFFTIHDLRKDRGIPGEVIRMVLLGTHYSKPMDWTAEKAAQAKATLWKWRKLTADVEPAGSPDAAVLAALADDLNTPAAITRLHSIAAQEDGALLKASASLLGLLEDDLRGWTLPPAIATASNVIEVSGSATAIVGTVPYRKTIERLLDERKQARLGKDFKRSDAIRDLLVGAGVIIKDTPAGAEWDLGPDFDPARLGEPE.

Cysteine 30 contributes to the Zn(2+) binding site. A 'HIGH' region motif is present at residues 32–42 (PTVYDRAHLGN). Positions 221, 246, and 250 each coordinate Zn(2+). The 'KMSKS' region signature appears at 279–283 (KMSKS). Position 282 (lysine 282) interacts with ATP.

Belongs to the class-I aminoacyl-tRNA synthetase family. Monomer. It depends on Zn(2+) as a cofactor.

Its subcellular location is the cytoplasm. The catalysed reaction is tRNA(Cys) + L-cysteine + ATP = L-cysteinyl-tRNA(Cys) + AMP + diphosphate. The protein is Cysteine--tRNA ligase of Cereibacter sphaeroides (strain ATCC 17029 / ATH 2.4.9) (Rhodobacter sphaeroides).